A 617-amino-acid chain; its full sequence is Acyl-CoA dehydrogenase family member 11 (617 aa).

The interval 1–47 (MHRIGNAVRMASSSSANATITARHTQYSHAKTGGFSQTGPTLHNPYK) is disordered. A compositionally biased stretch (low complexity) spans 11–22 (ASSSSANATITA). Polar residues predominate over residues 23–41 (RHTQYSHAKTGGFSQTGPT). FAD contacts are provided by residues 206–215 (QWMTEKKGGS) and 241–243 (FSS). S215 is a substrate binding site. Substrate is bound by residues S267 and R334. FAD is bound by residues R359, 366–369 (QSKW), E437, G441, and 464–466 (EGT).

The protein belongs to the acyl-CoA dehydrogenase family. As to quaternary structure, homotetramer; dimer of dimers.

In terms of biological role, promotes adaption to elevated temperatures by regulating expression of the lipid desaturase, fat-7. Binds selectively and with high affinity to fatty acids with chain lengths from C10 to C12 and prevents them from activating fat-7 expression mediated by the nuclear hormone receptor nhr-49, leading to low levels of membrane lipid desaturation and membrane fluidity for adaption to heat. This chain is Acyl-CoA dehydrogenase family member 11, found in Caenorhabditis elegans.